The primary structure comprises 105 residues: uncharacterized protein (105 aa).

A helical membrane pass occupies residues 25–47 (AHSVTLLFGIFRSSPFLLLFLLI). The tract at residues 54-89 (GRGSQRMKKKRGRANPSENLRERADPTNGPAENGKK) is disordered.

It is found in the membrane. This is an uncharacterized protein from Saccharomyces cerevisiae (strain ATCC 204508 / S288c) (Baker's yeast).